The sequence spans 150 residues: Large ribosomal subunit protein bL9 (150 aa).

Belongs to the bacterial ribosomal protein bL9 family.

Its function is as follows. Binds to the 23S rRNA. The polypeptide is Large ribosomal subunit protein bL9 (Halorhodospira halophila (strain DSM 244 / SL1) (Ectothiorhodospira halophila (strain DSM 244 / SL1))).